The sequence spans 263 residues: Acyl-[acyl-carrier-protein]--UDP-N-acetylglucosamine O-acyltransferase (263 aa).

Belongs to the transferase hexapeptide repeat family. LpxA subfamily. As to quaternary structure, homotrimer.

The protein resides in the cytoplasm. It carries out the reaction a (3R)-hydroxyacyl-[ACP] + UDP-N-acetyl-alpha-D-glucosamine = a UDP-3-O-[(3R)-3-hydroxyacyl]-N-acetyl-alpha-D-glucosamine + holo-[ACP]. It functions in the pathway glycolipid biosynthesis; lipid IV(A) biosynthesis; lipid IV(A) from (3R)-3-hydroxytetradecanoyl-[acyl-carrier-protein] and UDP-N-acetyl-alpha-D-glucosamine: step 1/6. Functionally, involved in the biosynthesis of lipid A, a phosphorylated glycolipid that anchors the lipopolysaccharide to the outer membrane of the cell. The sequence is that of Acyl-[acyl-carrier-protein]--UDP-N-acetylglucosamine O-acyltransferase from Stenotrophomonas maltophilia (strain R551-3).